We begin with the raw amino-acid sequence, 430 residues long: Serine--tRNA ligase (430 aa).

237–239 lines the L-serine pocket; the sequence is TAE. Position 268–270 (268–270) interacts with ATP; sequence RSE. Glu291 is a binding site for L-serine. Residue 355-358 participates in ATP binding; the sequence is EISS. Ser391 lines the L-serine pocket.

It belongs to the class-II aminoacyl-tRNA synthetase family. Type-1 seryl-tRNA synthetase subfamily. As to quaternary structure, homodimer. The tRNA molecule binds across the dimer.

It localises to the cytoplasm. The catalysed reaction is tRNA(Ser) + L-serine + ATP = L-seryl-tRNA(Ser) + AMP + diphosphate + H(+). It catalyses the reaction tRNA(Sec) + L-serine + ATP = L-seryl-tRNA(Sec) + AMP + diphosphate + H(+). It participates in aminoacyl-tRNA biosynthesis; selenocysteinyl-tRNA(Sec) biosynthesis; L-seryl-tRNA(Sec) from L-serine and tRNA(Sec): step 1/1. Catalyzes the attachment of serine to tRNA(Ser). Is also able to aminoacylate tRNA(Sec) with serine, to form the misacylated tRNA L-seryl-tRNA(Sec), which will be further converted into selenocysteinyl-tRNA(Sec). This chain is Serine--tRNA ligase, found in Salmonella schwarzengrund (strain CVM19633).